The primary structure comprises 466 residues: Asparagine--tRNA ligase (466 aa).

The protein belongs to the class-II aminoacyl-tRNA synthetase family. Homodimer.

It localises to the cytoplasm. It carries out the reaction tRNA(Asn) + L-asparagine + ATP = L-asparaginyl-tRNA(Asn) + AMP + diphosphate + H(+). This is Asparagine--tRNA ligase from Shewanella sediminis (strain HAW-EB3).